Here is a 234-residue protein sequence, read N- to C-terminus: Ubiquitin thioesterase OTUB2 (234 aa).

An OTU domain is found at 40–231 (TAIRKTKGDG…TSHYNILYAA (192 aa)). Asp48 is an active-site residue. Residue Cys51 is the Nucleophile of the active site. Residue His224 is part of the active site.

Belongs to the peptidase C65 family. In terms of tissue distribution, widely expressed. Expressed at higher level in brain.

The catalysed reaction is Thiol-dependent hydrolysis of ester, thioester, amide, peptide and isopeptide bonds formed by the C-terminal Gly of ubiquitin (a 76-residue protein attached to proteins as an intracellular targeting signal).. In terms of biological role, hydrolase that can remove conjugated ubiquitin from proteins in vitro and may therefore play an important regulatory role at the level of protein turnover by preventing degradation. Mediates deubiquitination of 'Lys-11'-,'Lys-48'- and 'Lys-63'-linked polyubiquitin chains, with a preference for 'Lys-63'-linked polyubiquitin chains. The chain is Ubiquitin thioesterase OTUB2 (OTUB2) from Homo sapiens (Human).